The chain runs to 1996 residues: Non-reducing polyketide synthase atnG (1996 aa).

The N-terminal acylcarrier protein transacylase (SAT) domain stretch occupies residues 9–245 (FLFGDQADAP…AELPAFGAVH (237 aa)). Positions 366–794 (SGSVAVIGMS…GGNSCFVLEE (429 aa)) constitute a Ketosynthase family 3 (KS3) domain. Catalysis depends on for beta-ketoacyl synthase activity residues cysteine 538, histidine 673, and histidine 713. Residues 891–1150 (AFAFTGQGAH…VKYTQAISHC (260 aa)) are malonyl-CoA:ACP transacylase (MAT) domain. Serine 982 serves as the catalytic For acyl/malonyl transferase activity. Residues 1263–1392 (HHLVSQDDNG…CCIRQTDEQD (130 aa)) form an N-terminal hotdog fold region. Residues 1263 to 1569 (HHLVSQDDNG…FRKMPRTTLH (307 aa)) form the PKS/mFAS DH domain. Residues 1267-1568 (SQDDNGKEQS…RFRKMPRTTL (302 aa)) are product template (PT) domain. The active-site Proton acceptor; for dehydratase activity is histidine 1295. Positions 1416-1569 (ASGIANRFQG…FRKMPRTTLH (154 aa)) are C-terminal hotdog fold. Aspartate 1481 (proton donor; for dehydratase activity) is an active-site residue. The disordered stretch occupies residues 1573 to 1621 (GKAVPPKPAKETSHPSVEATAPATTNGRSSATNAQAEAPAPPVNGSNGH). Residues 1594 to 1607 (PATTNGRSSATNAQ) are compositionally biased toward polar residues. The 78-residue stretch at 1620–1697 (GHRKTVESVL…DAQRQLRTLE (78 aa)) folds into the Carrier domain. Serine 1657 bears the O-(pantetheine 4'-phosphoryl)serine mark. Residues 1725-1923 (KRECNVVLMQ…ERTFVVWAKK (199 aa)) are thioesterase (TE) domain.

It functions in the pathway secondary metabolite biosynthesis; terpenoid biosynthesis. Functionally, non-reducing polyketide synthase; part of the gene cluster that mediates the biosynthesis of the meroterpenoids arthripenoids. The pathway begins with the HR-PKS atnH that catalyzes two chain-extension steps to form a reduced triketide, which then primes the SAT domain in the NR-PKS atnG to initiate three more cycles of extension to give a linear hexaketide corresponding to the polyketide part of arthripenoids. The FAD-dependent monooxygenase atnJ then performs an oxidative decarboxylation at C11 of the atnH/atnG product, via an electrophilic aromatic hydroxylation with concomitant ipso-decarboxylation. The membrane-bound polyprenyl transferase atnF then introduces a farnesyl group before the FAD-dependent monooxygenase atnK functions as the first epoxidase on terminal C12'-C13' olefin, followed by a second epoxidation on C7'-C8' catalyzed by atnA. The terpene cyclase/mutase atnI then initiates the sequential tricyclic ring formation through protonation of the terminal epoxide and catalyzes the regioselective and stereoselective 6/6/6-tricyclic ring formation. The cytochrome P450 monooxygenase atnM is responsible for hydroxylating both C1' and C10'. The next steps may involve ketoreduction and acetyl transfer by the ketoreductase atnB and the acetyltransferase atnC, and lead to the production of arthripenoid B, the final biosynthetic product of the atn cluster. The hydroquinone moiety in arthripenoid B is prone to undergo spontaneous oxidation to afford a benzoquinone compound, a key intermediate for generating structure diversity. For instance, addition of a cysteine followed by ring contraction gives arthripenoid A, tautomerization gives the main product arthripenoid C, addition of a molecular of water or amine affords arthripenoid D or E, respectively, and loss of one water forms arthripenoid F. The protein is Non-reducing polyketide synthase atnG of Arthrinium sp.